The sequence spans 29 residues: Cytochrome b6-f complex subunit 8 (29 aa).

Residues 3-23 (TVSIAWAALMVIFTFSISLVV) traverse the membrane as a helical segment.

The protein belongs to the PetN family. In terms of assembly, the 4 large subunits of the cytochrome b6-f complex are cytochrome b6, subunit IV (17 kDa polypeptide, PetD), cytochrome f and the Rieske protein, while the 4 small subunits are PetG, PetL, PetM and PetN. The complex functions as a dimer.

Its subcellular location is the plastid. The protein resides in the chloroplast thylakoid membrane. Functionally, component of the cytochrome b6-f complex, which mediates electron transfer between photosystem II (PSII) and photosystem I (PSI), cyclic electron flow around PSI, and state transitions. This is Cytochrome b6-f complex subunit 8 from Psilotum nudum (Whisk fern).